The sequence spans 842 residues: Alpha-glucan phosphorylase, H isozyme (842 aa).

Lys-688 carries the post-translational modification N6-(pyridoxal phosphate)lysine.

This sequence belongs to the glycogen phosphorylase family. It depends on pyridoxal 5'-phosphate as a cofactor.

The protein localises to the cytoplasm. The catalysed reaction is [(1-&gt;4)-alpha-D-glucosyl](n) + phosphate = [(1-&gt;4)-alpha-D-glucosyl](n-1) + alpha-D-glucose 1-phosphate. Its function is as follows. Phosphorylase is an important allosteric enzyme in carbohydrate metabolism. Enzymes from different sources differ in their regulatory mechanisms and in their natural substrates. However, all known phosphorylases share catalytic and structural properties. The H isoform exhibits higher affinity for branched polyglucans such as soluble starch or glycogen. The sequence is that of Alpha-glucan phosphorylase, H isozyme from Vicia faba (Broad bean).